The primary structure comprises 396 residues: MAKGKFERTKPHVNVGTIGHVDHGKTTLTAAITTVLTKKFGGEAKDYSQIDNAPEERARGITINTSHVEYETETRHYAHVDCPGHADYVKNMITGAAQMDGAILVVSAADGPMPQTREHILLARQVGVPYIIVFLNKADMVDDAELLELVEMEVRELLSKYDFPGDDTPIIKGSAKLALEGDQSDIGEPAIFRLAEALDTYIPTPERAVDGTFLMPVEDVFSISGRGTVVTGRVERGIVKVGDEIEIVGLKPTIKTTCTGVEMFRKLLDQGQAGDNVGVLLRGTKREEVERGQVLAKVGSIKPHTKFTAEIYVLGKDEGGRHTPFFNGYRPQFYFRTTDVTGAVELPAGTEMVMPGDNVSISVSLIAPIAMEEGLRFAIREGGRTVGAGVVAKIIE.

Positions 10–206 (KPHVNVGTIG…ALDTYIPTPE (197 aa)) constitute a tr-type G domain. Residues 19–26 (GHVDHGKT) are G1. 19 to 26 (GHVDHGKT) lines the GTP pocket. Position 26 (T26) interacts with Mg(2+). The interval 60-64 (GITIN) is G2. The interval 81–84 (DCPG) is G3. GTP contacts are provided by residues 81–85 (DCPGH) and 136–139 (NKAD). The tract at residues 136–139 (NKAD) is G4. Positions 174-176 (SAK) are G5.

Belongs to the TRAFAC class translation factor GTPase superfamily. Classic translation factor GTPase family. EF-Tu/EF-1A subfamily. As to quaternary structure, monomer.

The protein localises to the cytoplasm. The enzyme catalyses GTP + H2O = GDP + phosphate + H(+). GTP hydrolase that promotes the GTP-dependent binding of aminoacyl-tRNA to the A-site of ribosomes during protein biosynthesis. This Methylobacillus flagellatus (strain ATCC 51484 / DSM 6875 / VKM B-1610 / KT) protein is Elongation factor Tu 2.